Reading from the N-terminus, the 330-residue chain is L-asparaginase (330 aa).

Residues 4 to 330 (PQVTILATGG…EAIQKIFSTY (327 aa)) form the Asparaginase/glutaminase domain. The active-site O-isoaspartyl threonine intermediate is threonine 14. Position 93 to 94 (93 to 94 (TD)) interacts with substrate.

Belongs to the asparaginase 1 family. In terms of assembly, homotetramer.

The protein localises to the cytoplasm. The catalysed reaction is L-asparagine + H2O = L-aspartate + NH4(+). This is L-asparaginase (ansA) from Wolinella succinogenes (strain ATCC 29543 / DSM 1740 / CCUG 13145 / JCM 31913 / LMG 7466 / NCTC 11488 / FDC 602W) (Vibrio succinogenes).